A 156-amino-acid polypeptide reads, in one-letter code: MLRQFIISTVGRRQPLLMILQSRLASNLDKTEYTTPGEIVDYDDPPHLPVPEYPVRPDEPLETRKQRLLYQSRKRGMLENDLLLSTFVAKYLKDFSAEQTAEYDQLINGVSNDWDIFYWATDTKPTPPQFDTEIMRLLKEHVKNHEKVQRIRQPDL.

The N-terminal 24 residues, 1–24 (MLRQFIISTVGRRQPLLMILQSRL), are a transit peptide targeting the mitochondrion.

Belongs to the SDHAF2 family. As to quaternary structure, interacts with the flavoprotein subunit within the SDH catalytic dimer.

Its subcellular location is the mitochondrion matrix. Functionally, plays an essential role in the assembly of succinate dehydrogenase (SDH), an enzyme complex (also referred to as respiratory complex II) that is a component of both the tricarboxylic acid (TCA) cycle and the mitochondrial electron transport chain, and which couples the oxidation of succinate to fumarate with the reduction of ubiquinone (coenzyme Q) to ubiquinol. Required for flavinylation (covalent attachment of FAD) of the flavoprotein subunit of the SDH catalytic dimer. The sequence is that of Succinate dehydrogenase assembly factor 2-B, mitochondrial from Drosophila yakuba (Fruit fly).